A 255-amino-acid chain; its full sequence is 4-hydroxy-tetrahydrodipicolinate reductase (255 aa).

Residues 8–13, 89–91, and 114–117 each bind NAD(+); these read GASGRM, GTT, and SSNY. The active-site Proton donor/acceptor is H146. H147 serves as a coordination point for (S)-2,3,4,5-tetrahydrodipicolinate. K150 (proton donor) is an active-site residue. Residue 156-157 coordinates (S)-2,3,4,5-tetrahydrodipicolinate; the sequence is GT.

It belongs to the DapB family.

It localises to the cytoplasm. It catalyses the reaction (S)-2,3,4,5-tetrahydrodipicolinate + NAD(+) + H2O = (2S,4S)-4-hydroxy-2,3,4,5-tetrahydrodipicolinate + NADH + H(+). The catalysed reaction is (S)-2,3,4,5-tetrahydrodipicolinate + NADP(+) + H2O = (2S,4S)-4-hydroxy-2,3,4,5-tetrahydrodipicolinate + NADPH + H(+). It functions in the pathway amino-acid biosynthesis; L-lysine biosynthesis via DAP pathway; (S)-tetrahydrodipicolinate from L-aspartate: step 4/4. Catalyzes the conversion of 4-hydroxy-tetrahydrodipicolinate (HTPA) to tetrahydrodipicolinate. This Methanoregula boonei (strain DSM 21154 / JCM 14090 / 6A8) protein is 4-hydroxy-tetrahydrodipicolinate reductase.